Consider the following 168-residue polypeptide: Small ribosomal subunit protein bS16 (168 aa).

The interval 110-168 (LSEANNGPTAEAITEKKKKAREEKEAKEAAEKAAAEKAAAAEAEASEEAPAEEAASEEA) is disordered. The segment covering 129–144 (AREEKEAKEAAEKAAA) has biased composition (basic and acidic residues). Over residues 153–168 (EASEEAPAEEAASEEA) the composition is skewed to acidic residues.

It belongs to the bacterial ribosomal protein bS16 family.

The sequence is that of Small ribosomal subunit protein bS16 from Corynebacterium efficiens (strain DSM 44549 / YS-314 / AJ 12310 / JCM 11189 / NBRC 100395).